A 379-amino-acid chain; its full sequence is MKILRKNHPLLKIVNHSFIDLPTPSNISSWWNFGSLLGVCLMIQILTGLFLAMHYTSDTTTAFSSVAHICRDVNYGWLIRYLHANGASMFFICLFIHVGRGIYYGSYVLSETWNIGIILFLTTMATAFVGYVLPWGQMSFWGATVITNLLSAIPYIGSTLVEWIWGGFSVDKATLTRFFAFHFILPFIITAFALVHLLFLHETGSNNPSGLNSDSDKIPFHPYYTIKDLLGIFLLLLALMILALFFPDVLGDPDNFTPANPLNTPAHIKPEWYFLFAYAILRSIPNKLGGVLALILSILILAIFPLLNVSKQHGLIFRPITQTIYWTFIANLLVLTWIGGQPVEYPFTTIGQIASITYFTXIIILMPVSNTIXNNIIKL.

4 helical membrane passes run 33 to 53 (FGSL…FLAM), 77 to 98 (WLIR…FIHV), 113 to 133 (WNIG…GYVL), and 178 to 198 (FFAF…VHLL). Residues His83 and His97 each contribute to the heme b site. The heme b site is built by His182 and His196. His201 is a binding site for a ubiquinone. The next 4 membrane-spanning stretches (helical) occupy residues 226-246 (IKDL…ALFF), 288-308 (LGGV…PLLN), 320-340 (ITQT…WIGG), and 347-367 (FTTI…ILMP).

The protein belongs to the cytochrome b family. In terms of assembly, the cytochrome bc1 complex contains 11 subunits: 3 respiratory subunits (MT-CYB, CYC1 and UQCRFS1), 2 core proteins (UQCRC1 and UQCRC2) and 6 low-molecular weight proteins (UQCRH/QCR6, UQCRB/QCR7, UQCRQ/QCR8, UQCR10/QCR9, UQCR11/QCR10 and a cleavage product of UQCRFS1). This cytochrome bc1 complex then forms a dimer. Heme b serves as cofactor.

Its subcellular location is the mitochondrion inner membrane. Component of the ubiquinol-cytochrome c reductase complex (complex III or cytochrome b-c1 complex) that is part of the mitochondrial respiratory chain. The b-c1 complex mediates electron transfer from ubiquinol to cytochrome c. Contributes to the generation of a proton gradient across the mitochondrial membrane that is then used for ATP synthesis. The polypeptide is Cytochrome b (MT-CYB) (Akodon affinis (Colombian grass mouse)).